We begin with the raw amino-acid sequence, 477 residues long: Protoporphyrinogen oxidase (477 aa).

Residues glycine 9–glycine 14, tryptophan 42, glycine 57–glycine 60, valine 257, alanine 449, and valine 454–valine 456 each bind FAD.

The protein belongs to the protoporphyrinogen/coproporphyrinogen oxidase family. Protoporphyrinogen oxidase subfamily. Monomer. Homodimer. It depends on FAD as a cofactor.

The protein resides in the mitochondrion inner membrane. It carries out the reaction protoporphyrinogen IX + 3 O2 = protoporphyrin IX + 3 H2O2. It participates in porphyrin-containing compound metabolism; protoporphyrin-IX biosynthesis; protoporphyrin-IX from protoporphyrinogen-IX: step 1/1. Inhibited by acifluorfen. Its function is as follows. Catalyzes the 6-electron oxidation of protoporphyrinogen-IX to form protoporphyrin-IX. In Mus musculus (Mouse), this protein is Protoporphyrinogen oxidase (Ppox).